The sequence spans 324 residues: Disintegrin-like/cysteine-rich protein MPIII-3 (324 aa).

Residues 1–20 (MIQVLLVIICLAVFPYQVSS) form the signal peptide. Positions 21–173 (IILESGNINN…DEDPKKCEFR (153 aa)) are cleaved as a propeptide — or 174 (in a minor form). The region spanning 168-207 (KKCEFRRAGTECRPARSECDVAEYCTGQSAECPTDVFHSN) is the Disintegrin; truncated domain. Residues 179–192 (CRPARSECDVAEYC) are inhibits platelet aggregation. 9 disulfide bridges follow: cysteine 179–cysteine 199, cysteine 186–cysteine 218, cysteine 192–cysteine 199, cysteine 211–cysteine 223, cysteine 230–cysteine 280, cysteine 245–cysteine 287, cysteine 258–cysteine 268, cysteine 275–cysteine 312, and cysteine 306–cysteine 317. The D/ECD-tripeptide motif lies at 185-187 (ECD). Ca(2+) is bound by residues aspartate 187 and glutamate 190. Residues aspartate 202 and valine 203 each coordinate Ca(2+). A glycan (N-linked (GlcNAc...) asparagine) is linked at asparagine 237.

Belongs to the venom metalloproteinase (M12B) family. P-III subfamily. P-IIIe sub-subfamily. As to quaternary structure, monomer. Is able to form a homodimer. N-glycosylated. Exists in at least six differently N-glycosylated forms. The glycans likely have a stabilizing purpose. Post-translationally, cys-199 forms a disulfide bond with Cys-192 in 90% and with Cys-179 in 10% of the protein molecules; alternative disulfide bonds may have a major effect on the conformation of the protein. In terms of tissue distribution, expressed by the venom gland (at protein level). Expressed by the venom gland.

It is found in the secreted. With respect to regulation, activity may be regulated by the intramolecular thiol-disulfide exchange or disulfide bond switching. Functionally, abolishes platelet aggregation induced by collagen, ADP (IC(50)=292 nM) and arachidonic-acid. The inhibition of collagen-induced platelet aggregation may be due to its ability to bind collagen and block the binding site on collagen for platelets and/or to its ability to bind to the platelet alpha-2/beta-1 collagen receptor (ITGA2/ITGB1) to block its interaction with collagen and hence prevent platelet stimulation. The inhibition of ADP- or arachidonic-acid-induced platelet aggregation may be due to it acting as an antagonist of the ADP receptors or thromboxane-prostanoid receptors of the platelets, respectively. Does not interact with integrins alpha-IIb (ITGA2B) or beta-3 (ITGB3) nor platelet glycoproteins VI (GP6) or IX (GP9) in vitro, however, the detection is dependent on experimental conditions and may happen in vivo. Able to bind to platelet glycoprotein Ib alpha chain (GP1BA) receptor in vitro, although this interaction may have pathologically only limited effect in vivo as it is not able to abolish the von Willebrand factor (vWF)-dependent platelet agglutination induced by ristocetin. Does not affect blood coagulation. The sequence is that of Disintegrin-like/cysteine-rich protein MPIII-3 from Vipera ammodytes ammodytes (Western sand viper).